Consider the following 211-residue polypeptide: Redox-sensing transcriptional repressor Rex (211 aa).

Positions 17–56 (LYYRFIQNFAQEGMERISSKELSEAMKIDSATIRRDFSYF) form a DNA-binding region, H-T-H motif. 91–96 (GVGNLG) contributes to the NAD(+) binding site.

This sequence belongs to the transcriptional regulatory Rex family. Homodimer.

Its subcellular location is the cytoplasm. Modulates transcription in response to changes in cellular NADH/NAD(+) redox state. In Lysinibacillus sphaericus (strain C3-41), this protein is Redox-sensing transcriptional repressor Rex.